We begin with the raw amino-acid sequence, 454 residues long: Membrane-bound lytic murein transglycosylase F (454 aa).

The N-terminal stretch at 1–24 (MRRPLRRVTVVLLWVALAIGVAWF) is a signal peptide. The non-LT domain stretch occupies residues 25 to 265 (YDYRRSMQSL…IYNRYYTAVD (241 aa)). The tract at residues 266–454 (TFDYVDVKKF…YDILKQKKAV (189 aa)) is LT domain. Residue Glu-311 is part of the active site.

This sequence in the N-terminal section; belongs to the bacterial solute-binding protein 3 family. The protein in the C-terminal section; belongs to the transglycosylase Slt family.

Its subcellular location is the cell outer membrane. It catalyses the reaction Exolytic cleavage of the (1-&gt;4)-beta-glycosidic linkage between N-acetylmuramic acid (MurNAc) and N-acetylglucosamine (GlcNAc) residues in peptidoglycan, from either the reducing or the non-reducing ends of the peptidoglycan chains, with concomitant formation of a 1,6-anhydrobond in the MurNAc residue.. Its function is as follows. Murein-degrading enzyme that degrades murein glycan strands and insoluble, high-molecular weight murein sacculi, with the concomitant formation of a 1,6-anhydromuramoyl product. Lytic transglycosylases (LTs) play an integral role in the metabolism of the peptidoglycan (PG) sacculus. Their lytic action creates space within the PG sacculus to allow for its expansion as well as for the insertion of various structures such as secretion systems and flagella. This is Membrane-bound lytic murein transglycosylase F from Desulfosudis oleivorans (strain DSM 6200 / JCM 39069 / Hxd3) (Desulfococcus oleovorans).